The chain runs to 767 residues: Polyribonucleotide nucleotidyltransferase (767 aa).

Residues aspartate 509 and aspartate 515 each contribute to the Mg(2+) site. One can recognise a KH domain in the interval 575 to 634; sequence PRILTVKVPIDKIGEVIGPKGKMINSIQDETGAEITIEDDGTIYIGATDGPSAEAARDAI. Residues 646 to 718 form the S1 motif domain; sequence GERYLGTVVK…ERGKLSLVPV (73 aa). The disordered stretch occupies residues 725 to 767; that stretch reads AVAAPNGGESPNGAKKTDASGNGAKQPRRRRRTRSSSRSSENT. A compositionally biased stretch (basic residues) spans 750–759; the sequence is QPRRRRRTRS.

It belongs to the polyribonucleotide nucleotidyltransferase family. Mg(2+) serves as cofactor.

It localises to the cytoplasm. The catalysed reaction is RNA(n+1) + phosphate = RNA(n) + a ribonucleoside 5'-diphosphate. In terms of biological role, involved in mRNA degradation. Catalyzes the phosphorolysis of single-stranded polyribonucleotides processively in the 3'- to 5'-direction. The protein is Polyribonucleotide nucleotidyltransferase of Thermobifida fusca (strain YX).